The sequence spans 68 residues: uncharacterized protein (68 aa).

This is an uncharacterized protein from Invertebrate iridescent virus 3 (IIV-3).